Here is a 390-residue protein sequence, read N- to C-terminus: MPPSGLRLLPLLLPLLWLLVLTPGRPAAGLSTCKTIDMELVKRKRIEAIRGQILSKLRLASPPSQGEVPPGPLPEAVLALYNSTRDRVAGESAEPEPEPEADYYAKEVTRVLMVETHNEIYDKFKQSTHSIYMFFNTSELREAVPEPVLLSRAELRLLRLKLKVEQHVELYQKYSNNSWRYLSNRLLAPSDSPEWLSFDVTGVVRQWLSRGGEIEGFRLSAHCSCDSRDNTLQVDINGFTTGRRGDLATIHGMNRPFLLLMATPLERAQHLQSSRHRRALDTNYCFSSTEKNCCVRQLYIDFRKDLGWKWIHEPKGYHANFCLGPCPYIWSLDTQYSKVLALYNQHNPGASAAPCCVPQALEPLPIVYYVGRKPKVEQLSNMIVRSCKCS.

The N-terminal stretch at 1 to 29 is a signal peptide; sequence MPPSGLRLLPLLLPLLWLLVLTPGRPAAG. Positions 30 to 74 are straightjacket domain; the sequence is LSTCKTIDMELVKRKRIEAIRGQILSKLRLASPPSQGEVPPGPLP. Residues 75-271 form an arm domain region; the sequence is EAVLALYNST…ATPLERAQHL (197 aa). N-linked (GlcNAc...) asparagine glycans are attached at residues Asn-82, Asn-136, and Asn-176. A bowtie tail region spans residues 226-252; sequence DSRDNTLQVDINGFTTGRRGDLATIHG. The Cell attachment site motif lies at 244–246; sequence RGD. Intrachain disulfides connect Cys-285–Cys-294, Cys-293–Cys-356, Cys-322–Cys-387, and Cys-326–Cys-389.

Belongs to the TGF-beta family. In terms of assembly, homodimer; disulfide-linked. Interacts with the serine proteases, HTRA1 and HTRA3: the interaction with either inhibits TGFB1-mediated signaling and the HTRA protease activity is required for this inhibition. May interact with THSD4; this interaction may lead to sequestration by FBN1 microfibril assembly and attenuation of TGFB signaling. Interacts with CD109, DPT and ASPN. Interacts with EFEMP2. Interacts with TSKU; the interaction contributes to regulation of the hair cycle. As to quaternary structure, homodimer; disulfide-linked. Interacts with transforming growth factor beta-1 (TGF-beta-1) chain; interaction is non-covalent and maintains TGF-beta-1 in a latent state; each latency-associated peptide (LAP) monomer interacts with TGF-beta-1 in the other monomer. Interacts with LTBP1; leading to regulation of TGF-beta-1 activation. Interacts with LRRC32/GARP; leading to regulation of TGF-beta-1 activation on the surface of activated regulatory T-cells (Tregs). Interacts with LRRC33/NRROS; leading to regulation of TGF-beta-1 in macrophages and microglia. Interacts (via cell attachment site) with integrins ITGAV and ITGB6 (ITGAV:ITGB6), leading to release of the active TGF-beta-1. Interacts with NREP; the interaction results in a decrease in TGFB1 autoinduction. Interacts with HSP90AB1; inhibits latent TGFB1 activation. Interact with PSG9; leading to TGFB1 activation. Interacts with TGFBR3. Homodimer; disulfide-linked. Interacts with TGF-beta receptors (TGFBR1 and TGFBR2), leading to signal transduction. In terms of processing, transforming growth factor beta-1 proprotein: The precursor proprotein is cleaved in the Golgi apparatus by FURIN to form Transforming growth factor beta-1 (TGF-beta-1) and Latency-associated peptide (LAP) chains, which remain non-covalently linked, rendering TGF-beta-1 inactive. N-glycosylated. Deglycosylation leads to activation of Transforming growth factor beta-1 (TGF-beta-1); mechanisms triggering deglycosylation-driven activation of TGF-beta-1 are however unclear. As to expression, highly expressed in bone. Abundantly expressed in articular cartilage and chondrocytes and is increased in osteoarthritis (OA). Colocalizes with ASPN in chondrocytes within OA lesions of articular cartilage.

It is found in the secreted. The protein localises to the extracellular space. The protein resides in the extracellular matrix. Transforming growth factor beta-1 proprotein: Precursor of the Latency-associated peptide (LAP) and Transforming growth factor beta-1 (TGF-beta-1) chains, which constitute the regulatory and active subunit of TGF-beta-1, respectively. Functionally, required to maintain the Transforming growth factor beta-1 (TGF-beta-1) chain in a latent state during storage in extracellular matrix. Associates non-covalently with TGF-beta-1 and regulates its activation via interaction with 'milieu molecules', such as LTBP1, LRRC32/GARP and LRRC33/NRROS, that control activation of TGF-beta-1. Interaction with LRRC33/NRROS regulates activation of TGF-beta-1 in macrophages and microglia. Interaction with LRRC32/GARP controls activation of TGF-beta-1 on the surface of activated regulatory T-cells (Tregs). Interaction with integrins (ITGAV:ITGB6 or ITGAV:ITGB8) results in distortion of the Latency-associated peptide chain and subsequent release of the active TGF-beta-1. Its function is as follows. Multifunctional protein that regulates the growth and differentiation of various cell types and is involved in various processes, such as normal development, immune function, microglia function and responses to neurodegeneration. Activation into mature form follows different steps: following cleavage of the proprotein in the Golgi apparatus, Latency-associated peptide (LAP) and Transforming growth factor beta-1 (TGF-beta-1) chains remain non-covalently linked rendering TGF-beta-1 inactive during storage in extracellular matrix. At the same time, LAP chain interacts with 'milieu molecules', such as LTBP1, LRRC32/GARP and LRRC33/NRROS that control activation of TGF-beta-1 and maintain it in a latent state during storage in extracellular milieus. TGF-beta-1 is released from LAP by integrins (ITGAV:ITGB6 or ITGAV:ITGB8): integrin-binding to LAP stabilizes an alternative conformation of the LAP bowtie tail and results in distortion of the LAP chain and subsequent release of the active TGF-beta-1. Once activated following release of LAP, TGF-beta-1 acts by binding to TGF-beta receptors (TGFBR1 and TGFBR2), which transduce signal. While expressed by many cells types, TGF-beta-1 only has a very localized range of action within cell environment thanks to fine regulation of its activation by Latency-associated peptide chain (LAP) and 'milieu molecules'. Plays an important role in bone remodeling: acts as a potent stimulator of osteoblastic bone formation, causing chemotaxis, proliferation and differentiation in committed osteoblasts. Can promote either T-helper 17 cells (Th17) or regulatory T-cells (Treg) lineage differentiation in a concentration-dependent manner. At high concentrations, leads to FOXP3-mediated suppression of RORC and down-regulation of IL-17 expression, favoring Treg cell development. At low concentrations in concert with IL-6 and IL-21, leads to expression of the IL-17 and IL-23 receptors, favoring differentiation to Th17 cells. Stimulates sustained production of collagen through the activation of CREB3L1 by regulated intramembrane proteolysis (RIP). Mediates SMAD2/3 activation by inducing its phosphorylation and subsequent translocation to the nucleus. Positively regulates odontoblastic differentiation in dental papilla cells, via promotion of IPO7-mediated translocation of phosphorylated SMAD2 to the nucleus and subsequent transcription of target genes. Can induce epithelial-to-mesenchymal transition (EMT) and cell migration in various cell types. The sequence is that of Transforming growth factor beta-1 proprotein from Homo sapiens (Human).